The following is a 204-amino-acid chain: Thiamine-phosphate synthase (204 aa).

Residues 35-39 (QVREK) and Asn-67 each bind 4-amino-2-methyl-5-(diphosphooxymethyl)pyrimidine. Positions 68 and 87 each coordinate Mg(2+). 4-amino-2-methyl-5-(diphosphooxymethyl)pyrimidine is bound at residue Ser-106. 132–134 (TPT) serves as a coordination point for 2-[(2R,5Z)-2-carboxy-4-methylthiazol-5(2H)-ylidene]ethyl phosphate. Position 135 (Lys-135) interacts with 4-amino-2-methyl-5-(diphosphooxymethyl)pyrimidine. Residues Gly-163 and 183-184 (VS) contribute to the 2-[(2R,5Z)-2-carboxy-4-methylthiazol-5(2H)-ylidene]ethyl phosphate site.

It belongs to the thiamine-phosphate synthase family. Mg(2+) is required as a cofactor.

The catalysed reaction is 2-[(2R,5Z)-2-carboxy-4-methylthiazol-5(2H)-ylidene]ethyl phosphate + 4-amino-2-methyl-5-(diphosphooxymethyl)pyrimidine + 2 H(+) = thiamine phosphate + CO2 + diphosphate. It catalyses the reaction 2-(2-carboxy-4-methylthiazol-5-yl)ethyl phosphate + 4-amino-2-methyl-5-(diphosphooxymethyl)pyrimidine + 2 H(+) = thiamine phosphate + CO2 + diphosphate. The enzyme catalyses 4-methyl-5-(2-phosphooxyethyl)-thiazole + 4-amino-2-methyl-5-(diphosphooxymethyl)pyrimidine + H(+) = thiamine phosphate + diphosphate. The protein operates within cofactor biosynthesis; thiamine diphosphate biosynthesis; thiamine phosphate from 4-amino-2-methyl-5-diphosphomethylpyrimidine and 4-methyl-5-(2-phosphoethyl)-thiazole: step 1/1. In terms of biological role, condenses 4-methyl-5-(beta-hydroxyethyl)thiazole monophosphate (THZ-P) and 2-methyl-4-amino-5-hydroxymethyl pyrimidine pyrophosphate (HMP-PP) to form thiamine monophosphate (TMP). The chain is Thiamine-phosphate synthase from Vibrio campbellii (strain ATCC BAA-1116).